The following is a 22-amino-acid chain: Polydim-I (22 aa).

In terms of tissue distribution, expressed by the venom gland.

It localises to the secreted. Its function is as follows. Antibacterial peptide. Acts on the Mycobacterium abscessus subsp. massiliense cell wall. Reduces 40-50% of the bacterial load in macrophages infected with different M.abscessus strains. Is not cytotoxic towards mammalian cells, and shows no hemolytic activity against human erythrocytes. In vivo, reduces the bacterial load in the lungs, spleen, and liver of highly susceptible mice intravenously infected with M.abscessus. In Polybia dimorpha (Neotropical wasp), this protein is Polydim-I.